The following is a 101-amino-acid chain: NADH-quinone oxidoreductase subunit K (101 aa).

Transmembrane regions (helical) follow at residues 4–24 (VGHYLAVSAVLFTLGVLGIFI), 29–49 (IIVILMAIELILLAVNINLVA), and 65–85 (FVLTVAAGEAAIGLAILVIYF).

This sequence belongs to the complex I subunit 4L family. As to quaternary structure, NDH-1 is composed of 14 different subunits. Subunits NuoA, H, J, K, L, M, N constitute the membrane sector of the complex.

The protein localises to the cell inner membrane. It carries out the reaction a quinone + NADH + 5 H(+)(in) = a quinol + NAD(+) + 4 H(+)(out). NDH-1 shuttles electrons from NADH, via FMN and iron-sulfur (Fe-S) centers, to quinones in the respiratory chain. The immediate electron acceptor for the enzyme in this species is believed to be ubiquinone. Couples the redox reaction to proton translocation (for every two electrons transferred, four hydrogen ions are translocated across the cytoplasmic membrane), and thus conserves the redox energy in a proton gradient. In Sphingopyxis alaskensis (strain DSM 13593 / LMG 18877 / RB2256) (Sphingomonas alaskensis), this protein is NADH-quinone oxidoreductase subunit K.